We begin with the raw amino-acid sequence, 368 residues long: Dihydroorotate dehydrogenase (quinone) (368 aa).

Residues 67–71 and threonine 91 contribute to the FMN site; that span reads AGFDK. Lysine 71 contributes to the substrate binding site. Residue 116–120 participates in substrate binding; sequence NRMGF. Residues asparagine 146 and asparagine 179 each coordinate FMN. Asparagine 179 is a substrate binding site. Serine 182 acts as the Nucleophile in catalysis. Asparagine 184 contacts substrate. Lysine 222 and threonine 250 together coordinate FMN. Residue 251 to 252 participates in substrate binding; the sequence is NT. FMN-binding positions include glycine 276, glycine 305, and 326 to 327; that span reads YS.

Belongs to the dihydroorotate dehydrogenase family. Type 2 subfamily. Monomer. Requires FMN as cofactor.

The protein resides in the cell membrane. It carries out the reaction (S)-dihydroorotate + a quinone = orotate + a quinol. The protein operates within pyrimidine metabolism; UMP biosynthesis via de novo pathway; orotate from (S)-dihydroorotate (quinone route): step 1/1. Its function is as follows. Catalyzes the conversion of dihydroorotate to orotate with quinone as electron acceptor. This is Dihydroorotate dehydrogenase (quinone) from Streptomyces avermitilis (strain ATCC 31267 / DSM 46492 / JCM 5070 / NBRC 14893 / NCIMB 12804 / NRRL 8165 / MA-4680).